The chain runs to 204 residues: Proteasome subunit beta (204 aa).

Residues 1 to 8 constitute a propeptide, removed in mature form; by autocatalysis; it reads MDDKILEG. The active-site Nucleophile is threonine 9.

Belongs to the peptidase T1B family. In terms of assembly, the 20S proteasome core is composed of 14 alpha and 14 beta subunits that assemble into four stacked heptameric rings, resulting in a barrel-shaped structure. The two inner rings, each composed of seven catalytic beta subunits, are sandwiched by two outer rings, each composed of seven alpha subunits. The catalytic chamber with the active sites is on the inside of the barrel. Has a gated structure, the ends of the cylinder being occluded by the N-termini of the alpha-subunits. Is capped at one or both ends by the proteasome regulatory ATPase, PAN.

It localises to the cytoplasm. It catalyses the reaction Cleavage of peptide bonds with very broad specificity.. The formation of the proteasomal ATPase PAN-20S proteasome complex, via the docking of the C-termini of PAN into the intersubunit pockets in the alpha-rings, triggers opening of the gate for substrate entry. Interconversion between the open-gate and close-gate conformations leads to a dynamic regulation of the 20S proteasome proteolysis activity. Its function is as follows. Component of the proteasome core, a large protease complex with broad specificity involved in protein degradation. In Methanobrevibacter smithii (strain ATCC 35061 / DSM 861 / OCM 144 / PS), this protein is Proteasome subunit beta.